Consider the following 465-residue polypeptide: Cysteine--tRNA ligase (465 aa).

Residue Cys-29 coordinates Zn(2+). The 'HIGH' region motif lies at 31-41 (PTVYNYIHIGN). Residues Cys-209, His-234, and Glu-238 each contribute to the Zn(2+) site. Residues 266–270 (KMSKS) carry the 'KMSKS' region motif. Lys-269 contacts ATP. Ser-270 is modified (phosphoserine).

It belongs to the class-I aminoacyl-tRNA synthetase family. As to quaternary structure, monomer. Requires Zn(2+) as cofactor.

Its subcellular location is the cytoplasm. It carries out the reaction tRNA(Cys) + L-cysteine + ATP = L-cysteinyl-tRNA(Cys) + AMP + diphosphate. The protein is Cysteine--tRNA ligase of Bacillus cytotoxicus (strain DSM 22905 / CIP 110041 / 391-98 / NVH 391-98).